Reading from the N-terminus, the 109-residue chain is MVSGSDSRSEPSQLSDRDLVESVLRDLSEAADKWEALVTQAETVTYSVDLGDVRAVANSDGRLLELTLHPGVMTGYAHGELADRVNLAITALRDEVEAENRARYGGRLQ.

This is an uncharacterized protein from Mycobacterium tuberculosis (strain CDC 1551 / Oshkosh).